Reading from the N-terminus, the 40-residue chain is Protein YneP (40 aa).

This chain is Protein YneP, found in Escherichia coli (strain K12).